The sequence spans 328 residues: MKKYKPKSGERIERQEEVIPPKVELPFEFSPEHYPVLLQEVLAAFYPLRDKKELSYFDGTFGRGGHYMALKYAYPQMKATVMDQDLAAIAFAQSRFQTEVEKGQLNVIHGNFTQFSEHNLNNFDMMLLDLGVSSPQLDQGERGFSFYNDGPLDMRMNQQQGLTAEVLINTASEDELIRIFKEYGEVYRPSRVVRAIVNDRKTKAFQTTGALAGLIERVDGWQVKGHHPATKYFMALRLAVNSELEVVAEAIPKMIRALNPGGRLAVISFHSLEDRIVKNIFRESEDLGRTVTKKVIVPTQEECDRNSRSRSAKLRIFERSAQDELTKL.

Residues 64 to 66 (GGH), Asp83, Phe112, Asp129, and Gln136 each bind S-adenosyl-L-methionine.

Belongs to the methyltransferase superfamily. RsmH family.

Its subcellular location is the cytoplasm. The enzyme catalyses cytidine(1402) in 16S rRNA + S-adenosyl-L-methionine = N(4)-methylcytidine(1402) in 16S rRNA + S-adenosyl-L-homocysteine + H(+). In terms of biological role, specifically methylates the N4 position of cytidine in position 1402 (C1402) of 16S rRNA. The protein is Ribosomal RNA small subunit methyltransferase H of Bdellovibrio bacteriovorus (strain ATCC 15356 / DSM 50701 / NCIMB 9529 / HD100).